Here is a 566-residue protein sequence, read N- to C-terminus: Alpha-amylase (566 aa).

An N-terminal signal peptide occupies residues 1 to 28 (MARRLATASLAVLAAAATALTAPTPAAA). Ca(2+) is bound by residues Asn-120, Gln-166, and Asp-175. Residue Asp-205 is the Nucleophile of the active site. His-209 contacts Ca(2+). Glu-232 (proton donor) is an active-site residue. Residues 465-566 (GPGTGQTSAS…ALTLNDTWRG (102 aa)) form the CBM20 domain.

It belongs to the glycosyl hydrolase 13 family. Monomer. Requires Ca(2+) as cofactor.

It carries out the reaction Endohydrolysis of (1-&gt;4)-alpha-D-glucosidic linkages in polysaccharides containing three or more (1-&gt;4)-alpha-linked D-glucose units.. The polypeptide is Alpha-amylase (amy) (Streptomyces griseus).